We begin with the raw amino-acid sequence, 420 residues long: NEDD8-specific protease 1 (420 aa).

Positions 257-281 are enriched in low complexity; it reads KSSDSSETSHESSNSNLKKSSESGS. Positions 257 to 420 are disordered; sequence KSSDSSETSH…EELVSGDFPF (164 aa). The segment covering 286–296 has biased composition (basic and acidic residues); sequence NNHESDKDLHH. Residues 297–310 show a composition bias toward basic residues; it reads EGHHHHHHHHHHHH. Over residues 311–324 the composition is skewed to basic and acidic residues; that stretch reads SHDDDPSSPAEKKQ. Phosphoserine occurs at positions 329, 340, and 351. Residues 355-377 are compositionally biased toward basic and acidic residues; it reads NKEDHLPLLSDEKLDKSAIDKIE.

This sequence belongs to the peptidase C48 family. Interacts with csn1. It is, however, not a component of the signalosome.

The protein resides in the cytoplasm. Its function is as follows. Protease that catalyzes two essential functions in the NEDD8 pathway: processing of full-length NEDD8 to its mature form and deconjugation of NEDD8 from targeted proteins such as the pcu1, pcu2 and pcu4 cullins and other proteins. The chain is NEDD8-specific protease 1 (nep1) from Schizosaccharomyces pombe (strain 972 / ATCC 24843) (Fission yeast).